The following is a 611-amino-acid chain: Rho-related BTB domain-containing protein 3 (611 aa).

The rho-like stretch occupies residues 1 to 175; the sequence is MSIHIVALGN…KELGATYLEL (175 aa). BTB domains lie at 254 to 356 and 420 to 487; these read VDVV…QWEE and ADVV…CPAG. Positions 420 to 611 are interaction with Rab9; the sequence is ADVVFEIQGA…HSRKCRCLVM (192 aa).

In terms of assembly, interacts with RAB9A and RAB9B (at lower level compared to RAB9A-binding). Interacts with M6PRBP1/TIP47.

The protein resides in the golgi apparatus. Its function is as follows. Rab9-regulated ATPase required for endosome to Golgi transport. Involved in transport vesicle docking at the Golgi complex, possibly by participating in release M6PRBP1/TIP47 from vesicles to permit their efficient docking and fusion at the Golgi. Specifically binds Rab9, but not other Rab proteins. Has low intrinsic ATPase activity due to autoinhibition, which is relieved by Rab9. This Mus musculus (Mouse) protein is Rho-related BTB domain-containing protein 3 (Rhobtb3).